Reading from the N-terminus, the 235-residue chain is MLTLIVILAVSYLIGSIPTSIIAGKLLRGIDVRDYGSGNAGGTNAFRVLGWKAGLAVTLLDIVKGAVAAISVVVFFEAHPLGAMPDINPVALRLIAGLAAVFGHVFTVFAGFRGGKGVSTAAGMMFGIAPVSTLIVLAVFLLTIFVSRYVSVASIIAAIAFPLVILVRKYLFDLGEGLDYYIRMFNGHVFIHDSLDFHLLIFGMIVAFAIIYTHRANIGRLLSGNENRVTFGRHA.

Transmembrane regions (helical) follow at residues 4-24 (LIVI…IIAG), 56-76 (AVTL…VVFF), 90-110 (VALR…TVFA), 126-146 (FGIA…TIFV), 152-172 (VASI…KYLF), and 191-211 (IHDS…FAII).

Belongs to the PlsY family. In terms of assembly, probably interacts with PlsX.

The protein resides in the cell inner membrane. The enzyme catalyses an acyl phosphate + sn-glycerol 3-phosphate = a 1-acyl-sn-glycero-3-phosphate + phosphate. Its pathway is lipid metabolism; phospholipid metabolism. Catalyzes the transfer of an acyl group from acyl-phosphate (acyl-PO(4)) to glycerol-3-phosphate (G3P) to form lysophosphatidic acid (LPA). This enzyme utilizes acyl-phosphate as fatty acyl donor, but not acyl-CoA or acyl-ACP. This is Glycerol-3-phosphate acyltransferase from Prosthecochloris aestuarii (strain DSM 271 / SK 413).